Consider the following 510-residue polypeptide: Ectonucleoside triphosphate diphosphohydrolase 1 (510 aa).

Residues Met-1 to Asn-16 lie on the Cytoplasmic side of the membrane. A helical transmembrane segment spans residues Ile-17–Leu-37. The Extracellular portion of the chain corresponds to Thr-38–Ile-478. Asn-73 carries N-linked (GlcNAc...) asparagine glycosylation. A disulfide bridge connects residues Cys-84 and Cys-108. Catalysis depends on Glu-174, which acts as the Proton acceptor. N-linked (GlcNAc...) asparagine glycosylation is found at Asn-226, Asn-291, and Asn-333. Intrachain disulfides connect Cys-254–Cys-300 and Cys-281–Cys-324. Cystine bridges form between Cys-337/Cys-342 and Cys-391/Cys-414. Asn-428 and Asn-457 each carry an N-linked (GlcNAc...) asparagine glycan. A helical membrane pass occupies residues Gly-479–Tyr-499. Topologically, residues Ser-500–Val-510 are cytoplasmic.

This sequence belongs to the GDA1/CD39 NTPase family. Homodimer; disulfide-linked. Ca(2+) is required as a cofactor. Requires Mg(2+) as cofactor. N-glycosylated. In terms of processing, the N-terminus is blocked. Post-translationally, palmitoylated on Cys-13; which is required for caveola targeting.

The protein localises to the membrane. It localises to the caveola. The catalysed reaction is a ribonucleoside 5'-triphosphate + 2 H2O = a ribonucleoside 5'-phosphate + 2 phosphate + 2 H(+). The enzyme catalyses a ribonucleoside 5'-triphosphate + H2O = a ribonucleoside 5'-diphosphate + phosphate + H(+). It catalyses the reaction a ribonucleoside 5'-diphosphate + H2O = a ribonucleoside 5'-phosphate + phosphate + H(+). It carries out the reaction ATP + 2 H2O = AMP + 2 phosphate + 2 H(+). The catalysed reaction is ATP + H2O = ADP + phosphate + H(+). The enzyme catalyses ADP + H2O = AMP + phosphate + H(+). It catalyses the reaction CTP + 2 H2O = CMP + 2 phosphate + 2 H(+). It carries out the reaction CTP + H2O = CDP + phosphate + H(+). The catalysed reaction is CDP + H2O = CMP + phosphate + H(+). The enzyme catalyses GTP + 2 H2O = GMP + 2 phosphate + 2 H(+). It catalyses the reaction GTP + H2O = GDP + phosphate + H(+). It carries out the reaction GDP + H2O = GMP + phosphate + H(+). The catalysed reaction is ITP + 2 H2O = IMP + 2 phosphate + 2 H(+). The enzyme catalyses ITP + H2O = IDP + phosphate + H(+). It catalyses the reaction IDP + H2O = IMP + phosphate + H(+). It carries out the reaction UTP + 2 H2O = UMP + 2 phosphate + 2 H(+). The catalysed reaction is UTP + H2O = UDP + phosphate + H(+). The enzyme catalyses UDP + H2O = UMP + phosphate + H(+). Catalyzes the hydrolysis of both di- and triphosphate nucleotides (NDPs and NTPs) and hydrolyze NTPs to nucleotide monophosphates (NMPs) in two distinct successive phosphate-releasing steps, with NDPs as intermediates and participates in the regulation of extracellular levels of nucleotides. By hydrolyzing proinflammatory ATP and platelet-activating ADP to AMP, it blocks platelet aggregation and supports blood flow. This Mus musculus (Mouse) protein is Ectonucleoside triphosphate diphosphohydrolase 1.